The sequence spans 819 residues: MGSGPIDPLELLKGLDNILGQGGEVKALEGMAKIFNLMKQSQKMVNRCIYLNIVLQTHSPDILSKFIRVGGYKLLNNWLTYARTCNNSPLLHQILLTLQHLPLTVDHLKQNNTAKLVKQLSKSSEDEELRKLAGILVNDWMAVIRSQTNIQPADKEKKKKKEDAKGSSPVLDKTSEAKSEDNGDKKEKPKIQRTTAPSHAKFRSTGLEVEASSLVPVKKPTPVPVLSDKYLKPVPVKRQSSVPVPGDAAPAEKKYKPLNIVPNTTKEIKVKIIPPQPIESLGFLDALNSAPVPGIKIKKKKKAVSPTSNKASPFDSKSPTEASSLTKPSSPEPEPPVEGMEVERPGTPVPAIELPEPMEISAPPPPAPSETKPSEADASQLTKKGKKRKTVSWPEESRLREYFYFELDETERVNVNKIKDFGEAAKREMLKDRQAFQNARRHSHDTMEEVIPWVLPRLLNLPGALVQMGSNSTEKHAQAEREMGILQEIFLSKESVPDTPHEPDPESYEPSPPKLIPLDEDCSMDDGVYPESMDQSTESQSPDLNGAKLPPVLANLMGSMGSSKSPPNTLPGTMQEILTSIMGAQGNAKPEDLMKQPDFSEKIKHLLGSLQNQNQNQGPPGPAGQGSQGPVNIGFPPPSQKNHQPPPPHHQPPPPHYPPPGPNGPFQGPHGPPGGPRMMGPPPPQRDGYWEPPPNENLRGGSHHGGERGGMRGGDRGPPPPPFHRNRGGRGGEPGYRGRGRGGERGHPGRNGPYGMGHGDHRGHEGHRGHGGHGDHRGHGHGGDMSTRPTCRHFMMKGNCRYENNCAFYHPGINGPPLP.

The 75-residue stretch at 73–147 folds into the TFIIS N-terminal domain; that stretch reads KLLNNWLTYA…NDWMAVIRSQ (75 aa). 3 disordered regions span residues 151 to 204, 296 to 391, and 495 to 785; these read QPAD…KFRS, KIKK…RKTV, and SVPD…GGDM. Composition is skewed to basic and acidic residues over residues 153–165 and 173–190; these read ADKE…EDAK and KTSE…EKPK. Residues 305-327 show a composition bias toward polar residues; it reads SPTSNKASPFDSKSPTEASSLTK. The PP1-binding motif motif lies at 386 to 415; it reads KKRKTVSWPEESRLREYFYFELDETERVNV. Residues 495–504 are compositionally biased toward basic and acidic residues; sequence SVPDTPHEPD. 2 stretches are compositionally biased toward polar residues: residues 533–543 and 560–578; these read MDQSTESQSPD and MGSS…QEIL. The span at 589-604 shows a compositional bias: basic and acidic residues; that stretch reads KPEDLMKQPDFSEKIK. The segment covering 606–618 has biased composition (low complexity); sequence LLGSLQNQNQNQG. Composition is skewed to pro residues over residues 635–663 and 670–695; these read FPPP…PGPN and HGPP…PPPN. Basic and acidic residues-rich tracts occupy residues 704–715 and 758–777; these read HGGERGGMRGGD and HGDH…GDHR. Residues 785–813 form a C3H1-type zinc finger; that stretch reads MSTRPTCRHFMMKGNCRYENNCAFYHPGI.

As to quaternary structure, component of the PNUTS-PP1 complex (also named PTW/PP1 complex).

The protein resides in the nucleus. It localises to the chromosome. Its function is as follows. Substrate-recognition component of the PNUTS-PP1 protein phosphatase complex, a protein phosphatase 1 (PP1) complex that promotes RNA polymerase II transcription pause-release, allowing transcription elongation. Promoter-proximal pausing by RNA polymerase II is a transcription halt following transcription initiation but prior to elongation, which acts as a checkpoint to control that transcripts are favorably configured for transcriptional elongation. The PNUTS-PP1 complex mediates the release of RNA polymerase II from promoter-proximal region of genes by catalyzing dephosphorylation of proteins involved in transcription. In some context, PPP1R10/PNUTS also acts as an inhibitor of protein phosphatase 1 (PP1) activity by preventing access to substrates. In Xenopus laevis (African clawed frog), this protein is Serine/threonine-protein phosphatase 1 regulatory subunit 10 (ppp1r10).